The sequence spans 471 residues: Arginine biosynthesis bifunctional protein ArgJ, mitochondrial (471 aa).

Residues Thr-201, Lys-230, Thr-241, Glu-328, Asn-466, and Thr-471 each contribute to the substrate site. The active-site Nucleophile is the Thr-241.

This sequence belongs to the ArgJ family. In terms of assembly, heterodimer of an alpha and a beta chain. In terms of processing, the alpha and beta chains are autoproteolytically processed from a single precursor protein within the mitochondrion.

Its subcellular location is the mitochondrion matrix. It carries out the reaction N(2)-acetyl-L-ornithine + L-glutamate = N-acetyl-L-glutamate + L-ornithine. It catalyses the reaction L-glutamate + acetyl-CoA = N-acetyl-L-glutamate + CoA + H(+). Its pathway is amino-acid biosynthesis; L-arginine biosynthesis; L-ornithine and N-acetyl-L-glutamate from L-glutamate and N(2)-acetyl-L-ornithine (cyclic): step 1/1. The protein operates within amino-acid biosynthesis; L-arginine biosynthesis; N(2)-acetyl-L-ornithine from L-glutamate: step 1/4. In terms of biological role, catalyzes two activities which are involved in the cyclic version of arginine biosynthesis: the synthesis of acetylglutamate from glutamate and acetyl-CoA, and of ornithine by transacetylation between acetylornithine and glutamate. The sequence is that of Arginine biosynthesis bifunctional protein ArgJ, mitochondrial from Ajellomyces capsulatus (strain NAm1 / WU24) (Darling's disease fungus).